The primary structure comprises 921 residues: Probable serine/threonine-protein kinase DDB_G0275165 (921 aa).

One can recognise a Protein kinase domain in the interval 23-277 (FDPLSIIGSG…SNILGLLEYI (255 aa)). ATP-binding positions include 29–37 (IGSGGFGKV) and Lys50. Asp147 acts as the Proton acceptor in catalysis. Disordered regions lie at residues 289–453 (DYEP…SFPR), 465–492 (RGEE…NEED), 530–571 (RPWN…SDSN), 583–653 (NPTP…PTTI), 671–698 (STAT…SNNN), 737–813 (IQPL…SRSL), 833–858 (SSQQ…TSQF), and 877–921 (FEKS…KPKK). Composition is skewed to low complexity over residues 310–352 (NNNN…NNNN), 400–412 (SNIN…NNSN), and 429–445 (NING…NNNN). 2 stretches are compositionally biased toward low complexity: residues 539–550 (NNNNKNNNNNEK) and 583–638 (NPTP…SLSS). A compositionally biased stretch (polar residues) spans 643-653 (PQSTYKVPTTI). Composition is skewed to low complexity over residues 748–775 (TVAA…PTST), 842–857 (QPSS…PTSQ), and 892–910 (TSSS…PSSP).

This sequence belongs to the protein kinase superfamily. TKL Ser/Thr protein kinase family.

It catalyses the reaction L-seryl-[protein] + ATP = O-phospho-L-seryl-[protein] + ADP + H(+). The catalysed reaction is L-threonyl-[protein] + ATP = O-phospho-L-threonyl-[protein] + ADP + H(+). The protein is Probable serine/threonine-protein kinase DDB_G0275165 of Dictyostelium discoideum (Social amoeba).